The primary structure comprises 313 residues: Methionyl-tRNA formyltransferase (313 aa).

109–112 is a binding site for (6S)-5,6,7,8-tetrahydrofolate; the sequence is SLLP.

This sequence belongs to the Fmt family.

The enzyme catalyses L-methionyl-tRNA(fMet) + (6R)-10-formyltetrahydrofolate = N-formyl-L-methionyl-tRNA(fMet) + (6S)-5,6,7,8-tetrahydrofolate + H(+). In terms of biological role, attaches a formyl group to the free amino group of methionyl-tRNA(fMet). The formyl group appears to play a dual role in the initiator identity of N-formylmethionyl-tRNA by promoting its recognition by IF2 and preventing the misappropriation of this tRNA by the elongation apparatus. The polypeptide is Methionyl-tRNA formyltransferase (Thermotoga neapolitana (strain ATCC 49049 / DSM 4359 / NBRC 107923 / NS-E)).